The primary structure comprises 140 residues: Phosphoribosyl-AMP cyclohydrolase (140 aa).

Asp-85 provides a ligand contact to Mg(2+). Zn(2+) is bound at residue Cys-86. Mg(2+)-binding residues include Asp-87 and Asp-89. Positions 102 and 109 each coordinate Zn(2+).

This sequence belongs to the PRA-CH family. In terms of assembly, homodimer. Mg(2+) serves as cofactor. It depends on Zn(2+) as a cofactor.

It localises to the cytoplasm. The enzyme catalyses 1-(5-phospho-beta-D-ribosyl)-5'-AMP + H2O = 1-(5-phospho-beta-D-ribosyl)-5-[(5-phospho-beta-D-ribosylamino)methylideneamino]imidazole-4-carboxamide. The protein operates within amino-acid biosynthesis; L-histidine biosynthesis; L-histidine from 5-phospho-alpha-D-ribose 1-diphosphate: step 3/9. Catalyzes the hydrolysis of the adenine ring of phosphoribosyl-AMP. This Bradyrhizobium diazoefficiens (strain JCM 10833 / BCRC 13528 / IAM 13628 / NBRC 14792 / USDA 110) protein is Phosphoribosyl-AMP cyclohydrolase.